A 122-amino-acid chain; its full sequence is Large ribosomal subunit protein uL14 (122 aa).

The protein belongs to the universal ribosomal protein uL14 family. As to quaternary structure, part of the 50S ribosomal subunit. Forms a cluster with proteins L3 and L19. In the 70S ribosome, L14 and L19 interact and together make contacts with the 16S rRNA in bridges B5 and B8.

Its function is as follows. Binds to 23S rRNA. Forms part of two intersubunit bridges in the 70S ribosome. The protein is Large ribosomal subunit protein uL14 of Maridesulfovibrio salexigens (strain ATCC 14822 / DSM 2638 / NCIMB 8403 / VKM B-1763) (Desulfovibrio salexigens).